The following is a 430-amino-acid chain: 3-deoxy-D-manno-octulosonic acid transferase (430 aa).

Residues 12–32 (AFLVAAFLAAAPRIFYKVVFH) form a helical; Signal-anchor membrane-spanning segment. The Proton acceptor role is filled by glutamate 66. CMP-binding positions include 274-275 (PR), 314-316 (MGI), and 341-344 (NLLE).

The protein belongs to the glycosyltransferase group 1 family. Glycosyltransferase 30 subfamily.

It is found in the cell inner membrane. It catalyses the reaction lipid IVA (E. coli) + CMP-3-deoxy-beta-D-manno-octulosonate = alpha-Kdo-(2-&gt;6)-lipid IVA (E. coli) + CMP + H(+). It carries out the reaction alpha-Kdo-(2-&gt;6)-lipid IVA (E. coli) + CMP-3-deoxy-beta-D-manno-octulosonate = alpha-Kdo-(2-&gt;4)-alpha-Kdo-(2-&gt;6)-lipid IVA (E. coli) + CMP + H(+). The catalysed reaction is alpha-Kdo-(2-&gt;4)-alpha-Kdo-(2-&gt;6)-lipid IVA (E. coli) + CMP-3-deoxy-beta-D-manno-octulosonate = alpha-Kdo-(2-&gt;8)-alpha-Kdo-(2-&gt;4)-alpha-Kdo-(2-&gt;6)-lipid IVA (E. coli) + CMP + H(+). Its pathway is bacterial outer membrane biogenesis; LPS core biosynthesis. Its function is as follows. Involved in lipopolysaccharide (LPS) biosynthesis. Catalyzes the transfer of three 3-deoxy-D-manno-octulosonate (Kdo) residues from CMP-Kdo to lipid IV(A), the tetraacyldisaccharide-1,4'-bisphosphate precursor of lipid A. Thus generates the genus-specific LPS epitope of Chlamydia, composed of the trisaccharide alpha-Kdo-(2-&gt;8)-alpha-Kdo-(2-&gt;4)-alpha-Kdo. The protein is 3-deoxy-D-manno-octulosonic acid transferase (waaA) of Chlamydia muridarum (strain MoPn / Nigg).